The chain runs to 168 residues: NAD(P)H-quinone oxidoreductase subunit J, chloroplastic (168 aa).

Belongs to the complex I 30 kDa subunit family. NDH is composed of at least 16 different subunits, 5 of which are encoded in the nucleus.

The protein localises to the plastid. Its subcellular location is the chloroplast thylakoid membrane. It catalyses the reaction a plastoquinone + NADH + (n+1) H(+)(in) = a plastoquinol + NAD(+) + n H(+)(out). It carries out the reaction a plastoquinone + NADPH + (n+1) H(+)(in) = a plastoquinol + NADP(+) + n H(+)(out). NDH shuttles electrons from NAD(P)H:plastoquinone, via FMN and iron-sulfur (Fe-S) centers, to quinones in the photosynthetic chain and possibly in a chloroplast respiratory chain. The immediate electron acceptor for the enzyme in this species is believed to be plastoquinone. Couples the redox reaction to proton translocation, and thus conserves the redox energy in a proton gradient. This chain is NAD(P)H-quinone oxidoreductase subunit J, chloroplastic, found in Chaetosphaeridium globosum (Charophycean green alga).